Here is a 375-residue protein sequence, read N- to C-terminus: Probable serine/threonine-protein kinase PBL28 (375 aa).

The residue at position 65 (T65) is a Phosphothreonine. The Protein kinase domain occupies 76-356; sequence FSDENLLGKG…MDCVKELQLI (281 aa). ATP-binding positions include 82 to 90 and K104; that span reads LGKGGFGRV. A Phosphotyrosine modification is found at Y152. D205 (proton acceptor) is an active-site residue. T245 bears the Phosphothreonine mark. Y253 carries the post-translational modification Phosphotyrosine.

It belongs to the protein kinase superfamily. Ser/Thr protein kinase family.

The protein localises to the cell membrane. The enzyme catalyses L-seryl-[protein] + ATP = O-phospho-L-seryl-[protein] + ADP + H(+). It carries out the reaction L-threonyl-[protein] + ATP = O-phospho-L-threonyl-[protein] + ADP + H(+). Its function is as follows. May be involved in plant defense signaling. This Arabidopsis thaliana (Mouse-ear cress) protein is Probable serine/threonine-protein kinase PBL28.